Reading from the N-terminus, the 543-residue chain is Excitatory amino acid transporter 1 (543 aa).

Topologically, residues 1–47 are cytoplasmic; that stretch reads MTKSNGEDPRAGSRMERFQQGVRQRTLLAKKKVQNITKDDVKGFLKR. A helical membrane pass occupies residues 48 to 68; sequence NGFVLFTVIAVVVGSILGFSV. Residues 69 to 86 lie on the Extracellular side of the membrane; the sequence is RSYHMTFRELKYFSFPGE. A helical membrane pass occupies residues 87–108; that stretch reads LLMRMLQMLVLPLIVSSLVTGM. Over 109–122 the chain is Cytoplasmic; it reads AALDSKASGKMGLR. A helical membrane pass occupies residues 123–145; sequence AVVYYMTTTVIAVFIGIVIVIIV. The Extracellular portion of the chain corresponds to 146–237; sequence HPGKGTKEHM…MREEMIPVPG (92 aa). Asn206 and Asn217 each carry an N-linked (GlcNAc...) asparagine glycan. A helical transmembrane segment spans residues 238 to 261; it reads AVNGVNALGLVVFSMCFGLVIGNM. The Cytoplasmic portion of the chain corresponds to 262 to 270; that stretch reads KEQGKALKD. The helical transmembrane segment at 271 to 298 threads the bilayer; it reads FFDSLNEAIMRLVAVIMWYAPIGILFLI. At 299–319 the chain is on the extracellular side; sequence AGKIAEMEDMGVVGGQLGMYT. The chain crosses the membrane as a helical span at residues 320–341; the sequence is VTVIIGLLIHAVIVLPLLYFAV. Topologically, residues 342–346 are cytoplasmic; sequence TRKNP. The segment at residues 347 to 377 is an intramembrane region (discontinuously helical); that stretch reads WVFIGGILQALITALGTSSSSATLPITFKCL. 364–366 serves as a coordination point for L-aspartate; it reads SSS. At 378-386 the chain is on the cytoplasmic side; the sequence is EENNKVDKR. The helical transmembrane segment at 387–413 threads the bilayer; that stretch reads VTRFVLPVGATINMDGTALYEALAAIF. The Na(+) site is built by Gly395, Thr397, and Asn399. Thr403 lines the L-aspartate pocket. Residues 414–426 are Extracellular-facing; the sequence is IAQVNNYDLNFGQ. Residues 427 to 460 constitute an intramembrane region (discontinuously helical); that stretch reads ILTISITATAASIGAAGIPQAGLVTMVIVLTSVG. 444–448 contacts L-aspartate; that stretch reads IPQAG. Residues 461 to 473 are Extracellular-facing; sequence LPTDDITLIIAVD. The helical transmembrane segment at 474-495 threads the bilayer; the sequence is WFLDRLRTTTNVLGDSLGAGIV. Residues Asp477 and Asn484 each contribute to the L-aspartate site. Positions 484 and 488 each coordinate Na(+). The Cytoplasmic segment spans residues 496–543; it reads EHLSRHELQSGDAEMGNSVIEENEMKKPYQLVSQENELEKPIDSETKM. The segment at 521-543 is disordered; it reads KKPYQLVSQENELEKPIDSETKM. Over residues 532–543 the composition is skewed to basic and acidic residues; it reads ELEKPIDSETKM.

This sequence belongs to the dicarboxylate/amino acid:cation symporter (DAACS) (TC 2.A.23) family. As to quaternary structure, homotrimer. In terms of tissue distribution, detected in retina (at protein level).

The protein localises to the cell membrane. The catalysed reaction is K(+)(in) + L-glutamate(out) + 3 Na(+)(out) + H(+)(out) = K(+)(out) + L-glutamate(in) + 3 Na(+)(in) + H(+)(in). It carries out the reaction K(+)(in) + L-aspartate(out) + 3 Na(+)(out) + H(+)(out) = K(+)(out) + L-aspartate(in) + 3 Na(+)(in) + H(+)(in). It catalyses the reaction D-aspartate(out) + K(+)(in) + 3 Na(+)(out) + H(+)(out) = D-aspartate(in) + K(+)(out) + 3 Na(+)(in) + H(+)(in). Functionally, sodium-dependent, high-affinity amino acid transporter that mediates the uptake of L-glutamate and also L-aspartate and D-aspartate. Functions as a symporter that transports one amino acid molecule together with two or three Na(+) ions and one proton, in parallel with the counter-transport of one K(+) ion. Plays a redundant role in the rapid removal of released glutamate from the synaptic cleft, which is essential for terminating the postsynaptic action of glutamate. The sequence is that of Excitatory amino acid transporter 1 (SLC1A3) from Ambystoma tigrinum (Eastern tiger salamander).